The sequence spans 164 residues: NADH-quinone oxidoreductase subunit I (164 aa).

2 consecutive 4Fe-4S ferredoxin-type domains span residues 55–85 and 95–124; these read LRRYPNGEERCIACKLCEAVCPAQAITIDAE and TRYDIDMTKCIYCGFCEEACPVDAIVEGPN. The [4Fe-4S] cluster site is built by cysteine 65, cysteine 68, cysteine 71, cysteine 75, cysteine 104, cysteine 107, cysteine 110, and cysteine 114.

It belongs to the complex I 23 kDa subunit family. NDH-1 is composed of 14 different subunits. Subunits NuoA, H, J, K, L, M, N constitute the membrane sector of the complex. [4Fe-4S] cluster is required as a cofactor.

It is found in the cell inner membrane. The enzyme catalyses a quinone + NADH + 5 H(+)(in) = a quinol + NAD(+) + 4 H(+)(out). Its function is as follows. NDH-1 shuttles electrons from NADH, via FMN and iron-sulfur (Fe-S) centers, to quinones in the respiratory chain. The immediate electron acceptor for the enzyme in this species is believed to be ubiquinone. Couples the redox reaction to proton translocation (for every two electrons transferred, four hydrogen ions are translocated across the cytoplasmic membrane), and thus conserves the redox energy in a proton gradient. This Roseobacter denitrificans (strain ATCC 33942 / OCh 114) (Erythrobacter sp. (strain OCh 114)) protein is NADH-quinone oxidoreductase subunit I.